The sequence spans 76 residues: cAMP-dependent protein kinase inhibitor alpha (76 aa).

Residue Thr-2 is modified to N-acetylthreonine. The interval Lys-49–Ser-76 is disordered.

It belongs to the PKI family.

Extremely potent competitive inhibitor of cAMP-dependent protein kinase activity, this protein interacts with the catalytic subunit of the enzyme after the cAMP-induced dissociation of its regulatory chains. The protein is cAMP-dependent protein kinase inhibitor alpha (PKIA) of Homo sapiens (Human).